The following is a 234-amino-acid chain: OVARIAN TUMOR DOMAIN-containing deubiquitinating enzyme 3 (234 aa).

The region spanning 76 to 234 is the OTU domain; sequence YAVDRVKGDG…SGRNHYDLLR (159 aa). Residues 81–87 form a cys-loop region; the sequence is VKGDGRC. D84 is an active-site residue. The Nucleophile role is filled by C87. A variable-loop region spans residues 154–164; the sequence is IGRHDFWGGES. A his-loop region spans residues 224-229; it reads YSGRNH. H229 is an active-site residue.

The protein belongs to the peptidase C85 family.

It carries out the reaction Thiol-dependent hydrolysis of ester, thioester, amide, peptide and isopeptide bonds formed by the C-terminal Gly of ubiquitin (a 76-residue protein attached to proteins as an intracellular targeting signal).. In terms of biological role, hydrolase that can remove conjugated ubiquitin from proteins in vitro and may therefore play an important regulatory role at the level of protein turnover by preventing degradation. Cysteine protease with a preference for 'Lys-63' over 'Lys-48' over 'Met-1' -linked ubiquitin (UB) tetramers (e.g. Ub3 and Ub4) as substrates. Also cleaves RUB-GST fusion. This chain is OVARIAN TUMOR DOMAIN-containing deubiquitinating enzyme 3, found in Arabidopsis thaliana (Mouse-ear cress).